We begin with the raw amino-acid sequence, 205 residues long: Cytochrome c oxidase subunit 3 (205 aa).

5 helical membrane passes run 28 to 48, 72 to 92, 104 to 124, 142 to 162, and 184 to 204; these read GTIV…AMYF, ALVI…GVFA, WFSL…YEYF, FFIT…AFVV, and SYYW…IYFI.

It belongs to the cytochrome c oxidase subunit 3 family. In terms of assembly, associates with subunits I, II and IV to form cytochrome c oxidase.

Its subcellular location is the cell membrane. It catalyses the reaction 4 Fe(II)-[cytochrome c] + O2 + 8 H(+)(in) = 4 Fe(III)-[cytochrome c] + 2 H2O + 4 H(+)(out). This Corynebacterium diphtheriae (strain ATCC 700971 / NCTC 13129 / Biotype gravis) protein is Cytochrome c oxidase subunit 3 (ctaE).